Consider the following 121-residue polypeptide: Met-lysine-1b (121 aa).

The first 22 residues, 1-22, serve as a signal peptide directing secretion; it reads MKSFVFALALIVAFACISESKS. Positions 23–69 are excised as a propeptide; the sequence is DHTGYEEEENLEDSELTDLVAAALLEELAEASEMDDLSYTEEAGGER. Methionine 120 carries the post-translational modification Methionine amide.

As to expression, expressed by the venom gland.

It localises to the secreted. Shows no antimicrobial activity against Gram-positive bacterium B.subtilis B-501 or Gram-negative bacterium E.coli DH5-alpha at concentrations up to 20 ug/ml. Shows no toxicity towards insect (S.carnaria) larvae. The chain is Met-lysine-1b from Lachesana tarabaevi (Spider).